Reading from the N-terminus, the 448-residue chain is Endoglucanase (448 aa).

An N-terminal signal peptide occupies residues 1–34; the sequence is MFSKIKKINFFKKTFSFLIAVVMMLFTVLGTNTY. Residues H70, 74 to 75, Y101, and H137 each bind substrate; that span reads WY. The active-site Proton donor is the E175. Position 237 (Y237) interacts with substrate. The active-site Nucleophile is the E263. Substrate-binding positions include 269 to 270, W297, and 302 to 304; these read AS and KSE.

Belongs to the glycosyl hydrolase 5 (cellulase A) family.

It carries out the reaction Endohydrolysis of (1-&gt;4)-beta-D-glucosidic linkages in cellulose, lichenin and cereal beta-D-glucans.. In Clostridium saccharobutylicum, this protein is Endoglucanase (eglA).